The chain runs to 311 residues: uncharacterized protein (311 aa).

Residues Phe-168–Val-188 form a helical membrane-spanning segment.

The protein localises to the cell membrane. This is an uncharacterized protein from Edwardsiella tarda.